We begin with the raw amino-acid sequence, 311 residues long: Probable cysteine synthase (311 aa).

Position 45 is an N6-(pyridoxal phosphate)lysine (Lys-45). Residues Asn-75, 182–186 (GTGGT), and Ser-270 contribute to the pyridoxal 5'-phosphate site.

Belongs to the cysteine synthase/cystathionine beta-synthase family. The cofactor is pyridoxal 5'-phosphate.

It catalyses the reaction O-acetyl-L-serine + hydrogen sulfide = L-cysteine + acetate. Its pathway is amino-acid biosynthesis; L-cysteine biosynthesis; L-cysteine from L-serine: step 2/2. In Bacillus subtilis (strain 168), this protein is Probable cysteine synthase (ytkP).